Here is a 460-residue protein sequence, read N- to C-terminus: Ammonium transporter Rh type B (460 aa).

At 1–10 (MTGYSTNMRI) the chain is on the cytoplasmic side. The chain crosses the membrane as a helical span at residues 11-31 (KLPVFCLLLEFITIILFAVFV). Residues 32-62 (RYDHESDAKQWHDEMRNHSVQNAENDFYFRY) lie on the Extracellular side of the membrane. N-linked (GlcNAc...) asparagine glycosylation occurs at N48. A helical membrane pass occupies residues 63-83 (PSFQDVHVMIFIGFGFLMTFL). The Cytoplasmic segment spans residues 84–87 (KRYG). Residues 88–108 (FSSVAFNFLIAAFGLQWSTLI) form a helical membrane-spanning segment. Over 109 to 125 (QGFFHGFHDGKIHVGIE) the chain is Extracellular. A helical transmembrane segment spans residues 126–146 (SMINADFCTGAVLISFGAVLG). Residues 147 to 150 (KTSP) are Cytoplasmic-facing. A helical transmembrane segment spans residues 151-171 (VQLIVMTLIEVTLFGINEYII). Residues 172-179 (LNIVGAKD) are Extracellular-facing. A helical transmembrane segment spans residues 180 to 202 (AGGSMTIHTFGAYFGLIVSRVLY). Residues 203 to 220 (RDDLEKSRQREGSVYHSD) lie on the Cytoplasmic side of the membrane. Residues 221–241 (LFAMIGTIYLWMFWPSFNSAI) form a helical membrane-spanning segment. Residues 242-252 (TAHGDDQHRTV) are Extracellular-facing. Residues 253-273 (MNTYYSLAACTLATFGFSALL) traverse the membrane as a helical segment. Residues 274–283 (NGEGKLDMVH) are Cytoplasmic-facing. The chain crosses the membrane as a helical span at residues 284 to 304 (IQNAALAGGVAVGTSGEMMLT). A topological domain (extracellular) is located at residue P305. The helical transmembrane segment at 306 to 326 (FGAMIAGTLAGMISVLGYKYL) threads the bilayer. Over 327-347 (TPVLDSKLKIQDTCGVHNLHG) the chain is Cytoplasmic. The chain crosses the membrane as a helical span at residues 348–368 (MPGILGALIGAIVALFATAEI). The Extracellular segment spans residues 369 to 394 (YGAGMEDVFPLISDGSRTAKQQSLYQ). A helical transmembrane segment spans residues 395–415 (FLALLVALGFAILGGLVVGFI). Residues 416–460 (LKLPIFGTPSDAECFEDAVYWEVPGGEGHQQLTVVINNEDPDTQA) lie on the Cytoplasmic side of the membrane.

Belongs to the ammonium transporter (TC 2.A.49) family. Rh subfamily.

Its subcellular location is the basolateral cell membrane. The protein localises to the cytoplasmic vesicle membrane. Functions as a specific ammonium transporter. This chain is Ammonium transporter Rh type B (rhbg), found in Xenopus tropicalis (Western clawed frog).